Consider the following 352-residue polypeptide: Selenide, water dikinase (352 aa).

Residue C23 is part of the active site. ATP-binding positions include K26 and 54–56; that span reads SRD. Position 57 (D57) interacts with Mg(2+). ATP contacts are provided by residues D74, D97, and 145-147; that span reads GHS. Position 97 (D97) interacts with Mg(2+). Residue D233 coordinates Mg(2+).

This sequence belongs to the selenophosphate synthase 1 family. Class I subfamily. Homodimer. Mg(2+) is required as a cofactor.

The enzyme catalyses hydrogenselenide + ATP + H2O = selenophosphate + AMP + phosphate + 2 H(+). Functionally, synthesizes selenophosphate from selenide and ATP. In Shewanella baltica (strain OS223), this protein is Selenide, water dikinase.